A 156-amino-acid polypeptide reads, in one-letter code: Putative increased recombination centers protein 11 (156 aa).

Residues 20-42 (AALGATCLLHYLTTSLSIRFFFH) traverse the membrane as a helical segment.

It localises to the membrane. This Saccharomyces cerevisiae (strain ATCC 204508 / S288c) (Baker's yeast) protein is Putative increased recombination centers protein 11 (IRC11).